A 328-amino-acid chain; its full sequence is D-cysteine desulfhydrase (328 aa).

Lysine 51 carries the N6-(pyridoxal phosphate)lysine modification.

It belongs to the ACC deaminase/D-cysteine desulfhydrase family. Homodimer. Requires pyridoxal 5'-phosphate as cofactor.

The enzyme catalyses D-cysteine + H2O = hydrogen sulfide + pyruvate + NH4(+) + H(+). Functionally, catalyzes the alpha,beta-elimination reaction of D-cysteine and of several D-cysteine derivatives. It could be a defense mechanism against D-cysteine. The protein is D-cysteine desulfhydrase of Escherichia coli O9:H4 (strain HS).